The following is a 208-amino-acid chain: Imidazoleglycerol-phosphate dehydratase (208 aa).

The protein belongs to the imidazoleglycerol-phosphate dehydratase family.

It is found in the cytoplasm. The catalysed reaction is D-erythro-1-(imidazol-4-yl)glycerol 3-phosphate = 3-(imidazol-4-yl)-2-oxopropyl phosphate + H2O. It participates in amino-acid biosynthesis; L-histidine biosynthesis; L-histidine from 5-phospho-alpha-D-ribose 1-diphosphate: step 6/9. The polypeptide is Imidazoleglycerol-phosphate dehydratase (Hyphomonas neptunium (strain ATCC 15444)).